We begin with the raw amino-acid sequence, 278 residues long: E3 ubiquitin-protein ligase CHIP (278 aa).

TPR repeat units lie at residues 10 to 43 (AERLKEDGNNCFKKERFGAAIDAYTEAIALSPNV), 45 to 77 (AYWTNRALCHMKRKDWTKVEEDCRKAIQLVHNS), and 78 to 111 (VKAHYMLGLALLQKKEFTNGVKELQRALDLGRCS). The stretch at 143–194 (ELNSLKETCEAALNQQRALDMSRTEESSDEAYTAHTERLKALERVFKKAAEE) forms a coiled coil. Residues 199-273 (EVPDYLCCNI…AAYLEKHVWA (75 aa)) form the U-box domain.

Interacts with HSC70-4, PP2AA1, PP2AA3 and PP2A5, as well as with UBC8, UBC9 and UBC10. Also interacts with the chloroplastic proteolytic subunits ClpP4, FtsH1 and FtsH2.

The catalysed reaction is S-ubiquitinyl-[E2 ubiquitin-conjugating enzyme]-L-cysteine + [acceptor protein]-L-lysine = [E2 ubiquitin-conjugating enzyme]-L-cysteine + N(6)-ubiquitinyl-[acceptor protein]-L-lysine.. The protein operates within protein modification; protein ubiquitination. In terms of biological role, has E3 ubiquitin-protein ligase activity and may target misfolded substrates towards proteasomal degradation. Regulates the activity of some serine/threonine-protein phosphatases by E3 ubiquitin-protein ligase activity. Required for responses to biotic and abiotic stresses such as auxin, abscisic acid (ABA), low and high temperature and darkness, probably through the activation of serine/threonine-protein phosphatase and the subsequent modification of the plasma membrane composition. Regulates the chloroplastic Clp proteolytic activity in response to stresses. Ubiquitylates FtsH1, a component of the chloroplast FtsH protease, and affects protein degradation in chloroplasts. Mediates plastid precursor degradation to prevent cytosolic precursor accumulation, together with the molecular chaperone HSC70-4. Mediates ubiquitination of transit peptides and thereby led to their degradation through the ubiquitin-proteasome system. The chain is E3 ubiquitin-protein ligase CHIP from Arabidopsis thaliana (Mouse-ear cress).